A 236-amino-acid polypeptide reads, in one-letter code: Biosynthetic peptidoglycan transglycosylase (236 aa).

The helical transmembrane segment at 12–31 (ALFWFAAGSIVLVLVFRWVP) threads the bilayer.

The protein belongs to the glycosyltransferase 51 family.

It localises to the cell inner membrane. The catalysed reaction is [GlcNAc-(1-&gt;4)-Mur2Ac(oyl-L-Ala-gamma-D-Glu-L-Lys-D-Ala-D-Ala)](n)-di-trans,octa-cis-undecaprenyl diphosphate + beta-D-GlcNAc-(1-&gt;4)-Mur2Ac(oyl-L-Ala-gamma-D-Glu-L-Lys-D-Ala-D-Ala)-di-trans,octa-cis-undecaprenyl diphosphate = [GlcNAc-(1-&gt;4)-Mur2Ac(oyl-L-Ala-gamma-D-Glu-L-Lys-D-Ala-D-Ala)](n+1)-di-trans,octa-cis-undecaprenyl diphosphate + di-trans,octa-cis-undecaprenyl diphosphate + H(+). The protein operates within cell wall biogenesis; peptidoglycan biosynthesis. Its function is as follows. Peptidoglycan polymerase that catalyzes glycan chain elongation from lipid-linked precursors. This chain is Biosynthetic peptidoglycan transglycosylase, found in Pseudomonas putida (strain W619).